Consider the following 489-residue polypeptide: Aklavinone 12-hydroxylase DnrF (489 aa).

FAD contacts are provided by residues Leu17–Gly18, Glu37, Gln121, and Leu145. Residue Tyr224 is the Proton acceptor of the active site. Asp308 contributes to the FAD binding site. Gly317 serves as a coordination point for aklavinone. Disordered regions lie at residues Val402–His428 and Glu455–Asn489. Over residues Arg468–Met482 the composition is skewed to low complexity.

The protein belongs to the PheA/TfdB FAD monooxygenase family. As to quaternary structure, monomer. It depends on FAD as a cofactor.

The enzyme catalyses aklavinone + NADPH + O2 + H(+) = epsilon-rhodomycinone + NADP(+) + H2O. It participates in antibiotic biosynthesis; daunorubicin biosynthesis. The protein operates within antibiotic biosynthesis; carminomycin biosynthesis. Its pathway is antibiotic biosynthesis; rhodomycin biosynthesis. Functionally, involved in the biosynthesis of the anthracyclines carminomycin, rhodomycin and daunorubicin (daunomycin) which are aromatic polyketide antibiotics that exhibit high cytotoxicity and are widely applied in the chemotherapy of a variety of cancers. Catalyzes the incorporation of a hydroxyl group at position C-11 of aklavinone, resulting in epsilon-rhodomycinone. It cannot accept substrates glycosylated at position C-7. It can also hydroxylate 11-deoxycarminomycinone and can use both NAD or NADP. This Streptomyces peucetius protein is Aklavinone 12-hydroxylase DnrF (dnrF).